Here is a 381-residue protein sequence, read N- to C-terminus: Transaldolase 2 (381 aa).

The active-site Schiff-base intermediate with substrate is K141.

It belongs to the transaldolase family. Type 2 subfamily.

The protein resides in the cytoplasm. It carries out the reaction D-sedoheptulose 7-phosphate + D-glyceraldehyde 3-phosphate = D-erythrose 4-phosphate + beta-D-fructose 6-phosphate. It functions in the pathway carbohydrate degradation; pentose phosphate pathway; D-glyceraldehyde 3-phosphate and beta-D-fructose 6-phosphate from D-ribose 5-phosphate and D-xylulose 5-phosphate (non-oxidative stage): step 2/3. In terms of biological role, transaldolase is important for the balance of metabolites in the pentose-phosphate pathway. The protein is Transaldolase 2 (tal2) of Nostoc sp. (strain PCC 7120 / SAG 25.82 / UTEX 2576).